Here is a 275-residue protein sequence, read N- to C-terminus: uncharacterized protein (275 aa).

Residues 75–157 adopt a coiled-coil conformation; the sequence is AKELIKNRRL…AELKQAAEQG (83 aa).

This is an uncharacterized protein from Bacillus subtilis (strain 168).